The primary structure comprises 333 residues: Ribosomal RNA small subunit methyltransferase C (333 aa).

Belongs to the methyltransferase superfamily. RsmC family. In terms of assembly, monomer.

It localises to the cytoplasm. It catalyses the reaction guanosine(1207) in 16S rRNA + S-adenosyl-L-methionine = N(2)-methylguanosine(1207) in 16S rRNA + S-adenosyl-L-homocysteine + H(+). In terms of biological role, specifically methylates the guanine in position 1207 of 16S rRNA in the 30S particle. The protein is Ribosomal RNA small subunit methyltransferase C of Chromohalobacter salexigens (strain ATCC BAA-138 / DSM 3043 / CIP 106854 / NCIMB 13768 / 1H11).